The primary structure comprises 571 residues: Urease subunit alpha (571 aa).

A Urease domain is found at 133 to 571 (GGIDTHIHFI…LPLAQRYFLF (439 aa)). Ni(2+) contacts are provided by histidine 138, histidine 140, and lysine 221. Lysine 221 carries the N6-carboxylysine modification. Histidine 223 lines the substrate pocket. Ni(2+)-binding residues include histidine 250 and histidine 276. The Proton donor role is filled by histidine 324. Ni(2+) is bound at residue aspartate 364.

This sequence belongs to the metallo-dependent hydrolases superfamily. Urease alpha subunit family. In terms of assembly, heterotrimer of UreA (gamma), UreB (beta) and UreC (alpha) subunits. Three heterotrimers associate to form the active enzyme. It depends on Ni cation as a cofactor. Post-translationally, carboxylation allows a single lysine to coordinate two nickel ions.

It is found in the cytoplasm. The enzyme catalyses urea + 2 H2O + H(+) = hydrogencarbonate + 2 NH4(+). The protein operates within nitrogen metabolism; urea degradation; CO(2) and NH(3) from urea (urease route): step 1/1. This Corynebacterium efficiens (strain DSM 44549 / YS-314 / AJ 12310 / JCM 11189 / NBRC 100395) protein is Urease subunit alpha.